The primary structure comprises 145 residues: AP-2 complex subunit sigma (145 aa).

This sequence belongs to the adaptor complexes small subunit family. In terms of assembly, adaptor protein complex 2 (AP-2) is a heterotetramer composed of two large adaptins (alpha-type subunit apl3 and beta-type subunit apl1), a medium chain (mu-type subunit apm4) and a small adaptin (sigma-type subunit aps2).

It is found in the cell membrane. The protein localises to the membrane. It localises to the coated pit. Component of the adaptor complexes which link clathrin to receptors in coated vesicles. Clathrin-associated protein complexes are believed to interact with the cytoplasmic tails of membrane proteins, leading to their selection and concentration. In Aspergillus fumigatus (strain ATCC MYA-4609 / CBS 101355 / FGSC A1100 / Af293) (Neosartorya fumigata), this protein is AP-2 complex subunit sigma (aps2).